Reading from the N-terminus, the 508-residue chain is Photosystem II CP47 reaction center protein (508 aa).

Helical transmembrane passes span 21-36 (SVHI…WAGS), 101-115 (IVFS…IWHW), 140-156 (GIHL…FGAF), 203-218 (IAAG…FHLS), 237-252 (VLSS…AFVV), and 457-472 (SFAL…HGAR).

The protein belongs to the PsbB/PsbC family. PsbB subfamily. PSII is composed of 1 copy each of membrane proteins PsbA, PsbB, PsbC, PsbD, PsbE, PsbF, PsbH, PsbI, PsbJ, PsbK, PsbL, PsbM, PsbT, PsbX, PsbY, PsbZ, Psb30/Ycf12, at least 3 peripheral proteins of the oxygen-evolving complex and a large number of cofactors. It forms dimeric complexes. The cofactor is Binds multiple chlorophylls. PSII binds additional chlorophylls, carotenoids and specific lipids..

It localises to the plastid. Its subcellular location is the chloroplast thylakoid membrane. In terms of biological role, one of the components of the core complex of photosystem II (PSII). It binds chlorophyll and helps catalyze the primary light-induced photochemical processes of PSII. PSII is a light-driven water:plastoquinone oxidoreductase, using light energy to abstract electrons from H(2)O, generating O(2) and a proton gradient subsequently used for ATP formation. In Acorus calamus var. americanus (American sweet flag), this protein is Photosystem II CP47 reaction center protein.